Consider the following 362-residue polypeptide: E3 ubiquitin-protein ligase TM129 (362 aa).

At 1–6 (MESPAV) the chain is on the lumenal side. The chain crosses the membrane as a helical span at residues 7 to 27 (TFTLAYVVFSVCFVFTPNEFH). At 28-56 (SAGITVQNLLSGWLGSEDVAFVHYHIRRS) the chain is on the cytoplasmic side. The helical transmembrane segment at 57–77 (SATLLAHSLLPMGYFIGMCFA) threads the bilayer. Topologically, residues 78–94 (APEKELYNVHKAADGWK) are lumenal. The helical transmembrane segment at 95–115 (VFVLMAVLLPIATSILAFYWS) threads the bilayer. Over 116 to 362 (QKRWSNHPLA…FCIVDVCIVR (247 aa)) the chain is Cytoplasmic. Residues 285-350 (CIGCMQTNAN…SSQVPCPTCR (66 aa)) form an RING-type; degenerate zinc finger.

It belongs to the TMEM129 family. As to quaternary structure, integral component of ER-resident dislocation complexes.

The protein localises to the endoplasmic reticulum membrane. The enzyme catalyses S-ubiquitinyl-[E2 ubiquitin-conjugating enzyme]-L-cysteine + [acceptor protein]-L-lysine = [E2 ubiquitin-conjugating enzyme]-L-cysteine + N(6)-ubiquitinyl-[acceptor protein]-L-lysine.. The protein operates within protein modification; protein ubiquitination. Functionally, E3 ubiquitin-protein ligase involved in ER-associated protein degradation, preferentially associates with the E2 enzyme UBE2J2. The protein is E3 ubiquitin-protein ligase TM129 (tmem129) of Xenopus laevis (African clawed frog).